Consider the following 449-residue polypeptide: Trigger factor (449 aa).

In terms of domain architecture, PPIase FKBP-type spans 173–258 (GDRVTLDFVG…LKKVEWAHLP (86 aa)).

This sequence belongs to the FKBP-type PPIase family. Tig subfamily.

It localises to the cytoplasm. The catalysed reaction is [protein]-peptidylproline (omega=180) = [protein]-peptidylproline (omega=0). Functionally, involved in protein export. Acts as a chaperone by maintaining the newly synthesized protein in an open conformation. Functions as a peptidyl-prolyl cis-trans isomerase. The sequence is that of Trigger factor from Cupriavidus metallidurans (strain ATCC 43123 / DSM 2839 / NBRC 102507 / CH34) (Ralstonia metallidurans).